A 153-amino-acid polypeptide reads, in one-letter code: Histone H2B.4 (153 aa).

2 stretches are compositionally biased toward basic and acidic residues: residues 1-28 (MAPK…EKAP) and 36-53 (EKRL…EGKK). Residues 1–61 (MAPKAEKKPA…KKAGRKKAKK (61 aa)) are disordered. 2 positions are modified to N6-acetyllysine: K7 and K37. K149 is covalently cross-linked (Glycyl lysine isopeptide (Lys-Gly) (interchain with G-Cter in ubiquitin)).

It belongs to the histone H2B family. The nucleosome is a histone octamer containing two molecules each of H2A, H2B, H3 and H4 assembled in one H3-H4 heterotetramer and two H2A-H2B heterodimers. The octamer wraps approximately 147 bp of DNA. Post-translationally, can be acetylated to form H2BK6ac and H2BK33ac. Monoubiquitinated by BRE1 to form H2BK143ub1 and deubiquitinated by UBP26. Required for heterochromatic histone H3 di- and trimethylation at H3K4me. May give a specific tag for epigenetic transcriptional activation.

The protein localises to the nucleus. Its subcellular location is the chromosome. In terms of biological role, core component of nucleosome. Nucleosomes wrap and compact DNA into chromatin, limiting DNA accessibility to the cellular machineries which require DNA as a template. Histones thereby play a central role in transcription regulation, DNA repair, DNA replication and chromosomal stability. DNA accessibility is regulated via a complex set of post-translational modifications of histones, also called histone code, and nucleosome remodeling. In Oryza sativa subsp. indica (Rice), this protein is Histone H2B.4 (H2B.4).